The primary structure comprises 653 residues: UvrABC system protein B (653 aa).

One can recognise a Helicase ATP-binding domain in the interval 25–182; that stretch reads EGIERGVREQ…EKLVELQYKS (158 aa). An ATP-binding site is contributed by 38 to 45; the sequence is GVTGSGKT. Positions 91-114 match the Beta-hairpin motif; it reads YYDYYQPEAYIPHSDVYIEKDALI. In terms of domain architecture, Helicase C-terminal spans 429–591; that stretch reads QIADVVNESQ…ITPKSISKSV (163 aa). Positions 616–651 constitute a UVR domain; sequence EEDIIKLQKEMLLHAENLEFEKALEIRNQINKLSQH.

The protein belongs to the UvrB family. Forms a heterotetramer with UvrA during the search for lesions. Interacts with UvrC in an incision complex.

The protein localises to the cytoplasm. In terms of biological role, the UvrABC repair system catalyzes the recognition and processing of DNA lesions. A damage recognition complex composed of 2 UvrA and 2 UvrB subunits scans DNA for abnormalities. Upon binding of the UvrA(2)B(2) complex to a putative damaged site, the DNA wraps around one UvrB monomer. DNA wrap is dependent on ATP binding by UvrB and probably causes local melting of the DNA helix, facilitating insertion of UvrB beta-hairpin between the DNA strands. Then UvrB probes one DNA strand for the presence of a lesion. If a lesion is found the UvrA subunits dissociate and the UvrB-DNA preincision complex is formed. This complex is subsequently bound by UvrC and the second UvrB is released. If no lesion is found, the DNA wraps around the other UvrB subunit that will check the other stand for damage. The chain is UvrABC system protein B from Anaplasma phagocytophilum (strain HZ).